An 876-amino-acid chain; its full sequence is DNA mismatch repair protein MutS (876 aa).

626–633 (GPNMAGKS) lines the ATP pocket. Positions 829–856 (FRAAPPPPAPAAPPKASQVEERLRAIQP) are disordered. Positions 832–841 (APPPPAPAAP) are enriched in pro residues.

It belongs to the DNA mismatch repair MutS family.

In terms of biological role, this protein is involved in the repair of mismatches in DNA. It is possible that it carries out the mismatch recognition step. This protein has a weak ATPase activity. This chain is DNA mismatch repair protein MutS, found in Cereibacter sphaeroides (strain ATCC 17025 / ATH 2.4.3) (Rhodobacter sphaeroides).